A 54-amino-acid chain; its full sequence is MKIFFAILLILAVCSMAIWTVNGTPFAIRCKTDSDCSYKCPGNPPCRNGFCKCT.

A signal peptide spans 1 to 23 (MKIFFAILLILAVCSMAIWTVNG). Disulfide bonds link C30–C46, C36–C51, and C40–C53.

This sequence belongs to the short scorpion toxin superfamily. Potassium channel inhibitor family. Alpha-KTx 14 subfamily. In terms of tissue distribution, expressed by the venom gland.

The protein localises to the secreted. Inhibits potassium channels. May be active towards small conductance calcium-activated potassium channels (KCNN, SK), and less active towards voltage-gated potassium channels (Kv/KCN). This Mesobuthus gibbosus (Mediterranean checkered scorpion) protein is Potassium channel toxin alpha-KTx 14.5.